A 510-amino-acid polypeptide reads, in one-letter code: ATP synthase subunit alpha (510 aa).

169–176 (GDRQTGKT) is a binding site for ATP.

Belongs to the ATPase alpha/beta chains family. F-type ATPases have 2 components, CF(1) - the catalytic core - and CF(0) - the membrane proton channel. CF(1) has five subunits: alpha(3), beta(3), gamma(1), delta(1), epsilon(1). CF(0) has four main subunits: a(1), b(1), b'(1) and c(9-12).

It localises to the cell inner membrane. It carries out the reaction ATP + H2O + 4 H(+)(in) = ADP + phosphate + 5 H(+)(out). Its function is as follows. Produces ATP from ADP in the presence of a proton gradient across the membrane. The alpha chain is a regulatory subunit. The sequence is that of ATP synthase subunit alpha from Rhodopseudomonas palustris (strain ATCC BAA-98 / CGA009).